A 158-amino-acid chain; its full sequence is GTP-dependent dephospho-CoA kinase (158 aa).

6 residues coordinate GTP: D35, V36, D54, K56, E109, and D132.

The protein belongs to the GTP-dependent DPCK family.

It carries out the reaction 3'-dephospho-CoA + GTP = GDP + CoA + H(+). It participates in cofactor biosynthesis; coenzyme A biosynthesis. Its function is as follows. Catalyzes the GTP-dependent phosphorylation of the 3'-hydroxyl group of dephosphocoenzyme A to form coenzyme A (CoA). This chain is GTP-dependent dephospho-CoA kinase, found in Methanococcus vannielii (strain ATCC 35089 / DSM 1224 / JCM 13029 / OCM 148 / SB).